We begin with the raw amino-acid sequence, 314 residues long: DNA-directed RNA polymerase subunit alpha (314 aa).

The alpha N-terminal domain (alpha-NTD) stretch occupies residues 1-228 (MIEIEKPVIE…EHLNIFVGLT (228 aa)). The interval 245–314 (KEKVLEMTIE…ELGLGLRKEE (70 aa)) is alpha C-terminal domain (alpha-CTD).

This sequence belongs to the RNA polymerase alpha chain family. Homodimer. The RNAP catalytic core consists of 2 alpha, 1 beta, 1 beta' and 1 omega subunit. When a sigma factor is associated with the core the holoenzyme is formed, which can initiate transcription.

The enzyme catalyses RNA(n) + a ribonucleoside 5'-triphosphate = RNA(n+1) + diphosphate. Functionally, DNA-dependent RNA polymerase catalyzes the transcription of DNA into RNA using the four ribonucleoside triphosphates as substrates. The polypeptide is DNA-directed RNA polymerase subunit alpha (Halalkalibacterium halodurans (strain ATCC BAA-125 / DSM 18197 / FERM 7344 / JCM 9153 / C-125) (Bacillus halodurans)).